Consider the following 93-residue polypeptide: NAD(P)H-quinone oxidoreductase subunit 4L, chloroplastic (93 aa).

2 consecutive transmembrane segments (helical) span residues 1-21 (MLEH…SGLI) and 60-80 (IFAI…LSIA).

Belongs to the complex I subunit 4L family. NDH is composed of at least 16 different subunits, 5 of which are encoded in the nucleus.

The protein localises to the plastid. The protein resides in the chloroplast thylakoid membrane. The enzyme catalyses a plastoquinone + NADH + (n+1) H(+)(in) = a plastoquinol + NAD(+) + n H(+)(out). It catalyses the reaction a plastoquinone + NADPH + (n+1) H(+)(in) = a plastoquinol + NADP(+) + n H(+)(out). Functionally, NDH shuttles electrons from NAD(P)H:plastoquinone, via FMN and iron-sulfur (Fe-S) centers, to quinones in the photosynthetic chain and possibly in a chloroplast respiratory chain. The immediate electron acceptor for the enzyme in this species is believed to be plastoquinone. Couples the redox reaction to proton translocation, and thus conserves the redox energy in a proton gradient. The protein is NAD(P)H-quinone oxidoreductase subunit 4L, chloroplastic of Anthoceros angustus (Hornwort).